The sequence spans 1311 residues: AF4/FMR2 family member 2 (1311 aa).

Disordered regions lie at residues 94 to 187 (LVGI…LTQD), 204 to 229 (PQIGEVEESNPSAKEDSNPNSSGEDA), and 377 to 417 (TAGH…TKSV). Over residues 101–111 (SVPQNPNNKNE) the composition is skewed to polar residues. Residues 155–164 (SKPEWSRDSH) show a composition bias toward basic and acidic residues. Residues 165–187 (NPSTVLASQASGQPNKMQTLTQD) are compositionally biased toward polar residues. 2 stretches are compositionally biased toward polar residues: residues 377-396 (TAGHSEQSTFSIPGQESQHL) and 403-417 (QKWNDPTTRASTKSV). The residue at position 430 (Ser-430) is a Phosphoserine. Disordered regions lie at residues 457 to 530 (KAKP…KWQL), 574 to 726 (TNAS…DQEE), 818 to 867 (SLHA…IPEK), and 881 to 943 (PPCI…DKNI). Positions 465 to 477 (VNPPLATPQPPPA) are enriched in pro residues. Low complexity predominate over residues 478–491 (VQASGGSGSSSESE). A Phosphothreonine modification is found at Thr-517. Positions 582-597 (EPKERPLLSLIREKAR) are enriched in basic and acidic residues. Polar residues predominate over residues 615–625 (STTSETVSQRT). Residues 655–668 (PKEKESVELHDPPR) show a composition bias toward basic and acidic residues. The span at 669-679 (GRNKATAHKPA) shows a compositional bias: basic residues. A compositionally biased stretch (basic and acidic residues) spans 857-867 (PIEVAEKIPEK). 2 stretches are compositionally biased toward pro residues: residues 883–892 (CISPAPPHKP) and 913–922 (FPPPLSPLPE).

Belongs to the AF4 family. Brain (most abundant in hippocampus and amygdala), placenta and lung.

The protein resides in the nucleus speckle. Its function is as follows. RNA-binding protein. Might be involved in alternative splicing regulation through an interaction with G-quartet RNA structure. The polypeptide is AF4/FMR2 family member 2 (Homo sapiens (Human)).